The chain runs to 414 residues: Tryptophan synthase beta chain (414 aa).

Residues 1–26 (MVSTFSRKNQNYKKDDLNQPSKDGRF) form a disordered region. Residues 12–26 (YKKDDLNQPSKDGRF) show a composition bias toward basic and acidic residues. Lys109 carries the N6-(pyridoxal phosphate)lysine modification.

This sequence belongs to the TrpB family. As to quaternary structure, tetramer of two alpha and two beta chains. It depends on pyridoxal 5'-phosphate as a cofactor.

The enzyme catalyses (1S,2R)-1-C-(indol-3-yl)glycerol 3-phosphate + L-serine = D-glyceraldehyde 3-phosphate + L-tryptophan + H2O. It functions in the pathway amino-acid biosynthesis; L-tryptophan biosynthesis; L-tryptophan from chorismate: step 5/5. In terms of biological role, the beta subunit is responsible for the synthesis of L-tryptophan from indole and L-serine. The protein is Tryptophan synthase beta chain of Prochlorococcus marinus (strain MIT 9215).